The primary structure comprises 520 residues: GMP synthase [glutamine-hydrolyzing] (520 aa).

Residues 12–205 (KIIVLDYGSQ…AISICGARGD (194 aa)) enclose the Glutamine amidotransferase type-1 domain. The active-site Nucleophile is the Cys-89. Active-site residues include His-179 and Glu-181. The 190-residue stretch at 206–395 (WSMDNFIDME…LGMPEEIVWR (190 aa)) folds into the GMPS ATP-PPase domain. 233–239 (SGGVDSS) is an ATP binding site.

In terms of assembly, homodimer.

It carries out the reaction XMP + L-glutamine + ATP + H2O = GMP + L-glutamate + AMP + diphosphate + 2 H(+). It functions in the pathway purine metabolism; GMP biosynthesis; GMP from XMP (L-Gln route): step 1/1. Catalyzes the synthesis of GMP from XMP. The protein is GMP synthase [glutamine-hydrolyzing] of Streptococcus pyogenes serotype M1.